A 397-amino-acid polypeptide reads, in one-letter code: F-box protein At3g28330 (397 aa).

The 51-residue stretch at 6–56 folds into the F-box domain; it reads KKDMDFLTEDLWEIILARLPLKSIITTPKLVCKVWKSIIESRCFRDLFQSL.

In Arabidopsis thaliana (Mouse-ear cress), this protein is F-box protein At3g28330.